A 140-amino-acid polypeptide reads, in one-letter code: Ribosome-binding factor A (140 aa).

A disordered region spans residues 121-140; the sequence is KAAEHGREDEELDDTEQDDK. The span at 129 to 140 shows a compositional bias: acidic residues; the sequence is DEELDDTEQDDK.

It belongs to the RbfA family. As to quaternary structure, monomer. Binds 30S ribosomal subunits, but not 50S ribosomal subunits or 70S ribosomes.

Its subcellular location is the cytoplasm. Functionally, one of several proteins that assist in the late maturation steps of the functional core of the 30S ribosomal subunit. Associates with free 30S ribosomal subunits (but not with 30S subunits that are part of 70S ribosomes or polysomes). Required for efficient processing of 16S rRNA. May interact with the 5'-terminal helix region of 16S rRNA. This Shewanella loihica (strain ATCC BAA-1088 / PV-4) protein is Ribosome-binding factor A.